The primary structure comprises 553 residues: Mucolipin-3 (553 aa).

Residues 1-62 are Cytoplasmic-facing; sequence MANPEVLVSS…FWARGRKPWK (62 aa). Residues 52–62 are interaction with phosphoinositides; the sequence is KFWARGRKPWK. The chain crosses the membrane as a helical span at residues 63-83; it reads LAIQILKIAMVTIQLVLFGLS. The Extracellular portion of the chain corresponds to 84–283; sequence NQMVVAFKEE…VSGSIQKNTH (200 aa). The tract at residues 104–118 is extracellular/lumenal pore loop; that stretch reads KGYMDRMDDTYAVYT. A glycan (N-linked (GlcNAc...) asparagine) is linked at N138. The cysteines at positions 159 and 185 are disulfide-linked. Residue N205 is glycosylated (N-linked (GlcNAc...) asparagine). An intrachain disulfide couples C238 to C269. The chain crosses the membrane as a helical span at residues 284 to 304; it reads YMMIFDAFVILTCLASLVLCA. Topologically, residues 305-341 are cytoplasmic; sequence RSVIRGLQLQQEFVNFFLLHYKKEVSASDQMEFINGW. The helical transmembrane segment at 342 to 362 threads the bilayer; sequence YIMIIISDILTIVGSVLKMEI. Residues 363 to 371 are Extracellular-facing; it reads QAKSLTSYD. A helical membrane pass occupies residues 372–392; that stretch reads VCSILLGTSTMLVWLGVIRYL. At 393-414 the chain is on the cytoplasmic side; it reads GFFAKYNLLILTLQAALPNVMR. A helical membrane pass occupies residues 415 to 435; it reads FCCCAAMIYLGYCFCGWIVLG. Topologically, residues 436 to 443 are extracellular; the sequence is PYHEKFRS. Residues 444-464 constitute an intramembrane region (pore-forming); sequence LNRVSECLFSLINGDDMFSTF. The Selectivity filter motif lies at 456–459; that stretch reads NGDD. Topologically, residues 465 to 475 are extracellular; the sequence is AKMQQKSYLVW. A helical transmembrane segment spans residues 476-497; sequence LFSRVYLYSFISLFIYMILSLF. At 498-553 the chain is on the cytoplasmic side; sequence IALITDTYETIKHYQQDGFPETELRKFIAECKDLPNSGKYRLEDDPPGSLLCCCKK.

This sequence belongs to the transient receptor (TC 1.A.4) family. Polycystin subfamily. MCOLN3 sub-subfamily. In terms of assembly, homotetramer. Can heterooligomerize with MCOLN1; heteromeric assemblies have different channel properties as compared to the respective homooligomers and may be tissue-specific. May heterooligomerize with TRPV5 to form a functional distinct ion channel. Interacts with GABARAPL2. In terms of processing, N-glycosylated. Expressed in the cochlea; particularly in the inner and outer hair cells (at protein level).

The protein resides in the early endosome membrane. It localises to the late endosome membrane. It is found in the cytoplasmic vesicle. The protein localises to the autophagosome membrane. Its subcellular location is the cell projection. The protein resides in the stereocilium membrane. It catalyses the reaction Ca(2+)(in) = Ca(2+)(out). The enzyme catalyses Mg(2+)(in) = Mg(2+)(out). The catalysed reaction is K(+)(in) = K(+)(out). It carries out the reaction Na(+)(in) = Na(+)(out). Its activity is regulated as follows. Channel activity is activated by PtdIns(3,5)P2 (phosphatidylinositol 3,5-bisphosphate). Inhibited by lumenal H(+) and Na(+). The channel pore shows dynamic behavior and undergoes spontaneous, Ca(2+)-dependent modulation when conducting Ca(2+). Its function is as follows. Nonselective cation channel probably playing a role in the regulation of membrane trafficking events. Acts as a Ca(2+)-permeable cation channel with inwardly rectifying activity. Mediates release of Ca(2+) from endosomes to the cytoplasm, contributes to endosomal acidification and is involved in the regulation of membrane trafficking and fusion in the endosomal pathway. Also permeable to Mg(2+), Na(+) and K(+). Does not seem to act as mechanosensory transduction channel in inner ear sensory hair cells. Proposed to play a critical role at the cochlear stereocilia ankle-link region during hair-bundle growth. Involved in the regulation of autophagy. Through association with GABARAPL2 may be involved in autophagosome formation possibly providing Ca(2+) for the fusion process. Through a possible and probably tissue-specific heteromerization with MCOLN1 may be at least in part involved in many lysosome-dependent cellular events. Possible heteromeric ion channel assemblies with TRPV5 show pharmacological similarity with TRPML3. The sequence is that of Mucolipin-3 (Mcoln3) from Mus musculus (Mouse).